The sequence spans 568 residues: Hemagglutinin-neuraminidase (568 aa).

Residues 1 to 18 (MSGAEGNTNKRTFRAVFR) lie on the Intravirion side of the membrane. The helical transmembrane segment at 19–39 (TLIILITLTILALSAAILYEV) threads the bilayer. Residues 40–568 (THTSNGSESN…VPFLREVIIT (529 aa)) are Virion surface-facing. Residues Asn-44 and Asn-111 are each glycosylated (N-linked (GlcNAc...) asparagine; by host). 3 disulfides stabilise this stretch: Cys-162-Cys-186, Cys-176-Cys-237, and Cys-228-Cys-241. Residues 224–229 (NRKSCS) form an involved in neuraminidase activity region. N-linked (GlcNAc...) asparagine; by host glycosylation is found at Asn-268 and Asn-280. Cystine bridges form between Cys-334–Cys-455, Cys-366–Cys-376, and Cys-449–Cys-459. Asn-382 carries an N-linked (GlcNAc...) asparagine; by host glycan. Asn-513 carries N-linked (GlcNAc...) asparagine; by host glycosylation. Cys-531 and Cys-542 are joined by a disulfide.

It belongs to the paramyxoviruses hemagglutinin-neuraminidase family. Homotetramer; composed of disulfide-linked homodimers.

Its subcellular location is the virion membrane. The protein localises to the host cell membrane. It carries out the reaction Hydrolysis of alpha-(2-&gt;3)-, alpha-(2-&gt;6)-, alpha-(2-&gt;8)- glycosidic linkages of terminal sialic acid residues in oligosaccharides, glycoproteins, glycolipids, colominic acid and synthetic substrates.. Its function is as follows. Attaches the virus to sialic acid-containing cell receptors and thereby initiating infection. Binding of HN protein to the receptor induces a conformational change that allows the F protein to trigger virion/cell membranes fusion. Neuraminidase activity ensures the efficient spread of the virus by dissociating the mature virions from the neuraminic acid containing glycoproteins. This chain is Hemagglutinin-neuraminidase (HN), found in Simiiformes (SV41).